Consider the following 94-residue polypeptide: YcgL domain-containing protein VP0875 (94 aa).

One can recognise a YcgL domain in the interval 1 to 84; that stretch reads MLCSIYKSSK…PPENLLEKYK (84 aa).

The chain is YcgL domain-containing protein VP0875 from Vibrio parahaemolyticus serotype O3:K6 (strain RIMD 2210633).